A 377-amino-acid chain; its full sequence is Succinyl-diaminopimelate desuccinylase (377 aa).

Position 68 (His-68) interacts with Zn(2+). Residue Asp-70 is part of the active site. A Zn(2+)-binding site is contributed by Asp-101. The active-site Proton acceptor is the Glu-135. Residues Glu-136, Glu-164, and His-350 each coordinate Zn(2+).

The protein belongs to the peptidase M20A family. DapE subfamily. Homodimer. Zn(2+) is required as a cofactor. The cofactor is Co(2+).

It catalyses the reaction N-succinyl-(2S,6S)-2,6-diaminopimelate + H2O = (2S,6S)-2,6-diaminopimelate + succinate. Its pathway is amino-acid biosynthesis; L-lysine biosynthesis via DAP pathway; LL-2,6-diaminopimelate from (S)-tetrahydrodipicolinate (succinylase route): step 3/3. Its function is as follows. Catalyzes the hydrolysis of N-succinyl-L,L-diaminopimelic acid (SDAP), forming succinate and LL-2,6-diaminopimelate (DAP), an intermediate involved in the bacterial biosynthesis of lysine and meso-diaminopimelic acid, an essential component of bacterial cell walls. This Acinetobacter baylyi (strain ATCC 33305 / BD413 / ADP1) protein is Succinyl-diaminopimelate desuccinylase.